A 142-amino-acid polypeptide reads, in one-letter code: Glia maturation factor beta (142 aa).

Position 2 is an N-acetylserine (Ser-2). The region spanning 4–139 is the ADF-H domain; the sequence is SLVVCDVAED…TEEWLREKLG (136 aa).

It belongs to the actin-binding proteins ADF family. GMF subfamily. Post-translationally, phosphorylated; stimulated by phorbol ester.

Functionally, this protein causes differentiation of brain cells, stimulation of neural regeneration, and inhibition of proliferation of tumor cells. The polypeptide is Glia maturation factor beta (Gmfb) (Rattus norvegicus (Rat)).